The primary structure comprises 403 residues: Calcium-responsive transactivator (403 aa).

The segment at 1-148 is N-terminal auto-inhibitory domain; that stretch reads MSVAFASARP…TLPTTTMSMA (148 aa). The SH2-binding signature appears at 50-53; the sequence is YQQI. Disordered stretches follow at residues 72-111, 152-171, 224-303, and 318-403; these read QSLL…ALGS, HGSA…VPMQ, NQSS…RTFE, and SQQQ…NYQQ. 2 stretches are compositionally biased toward polar residues: residues 92 to 105 and 161 to 171; these read QTGP…QGNL and TVPSSQNVPMQ. The interval 149–238 is methionine-rich intra-molecular domain; that stretch reads VSTHGSAPGY…GSSMMGQRPL (90 aa). The segment covering 224 to 235 has biased composition (low complexity); that stretch reads NQSSQGSSMMGQ. Residues 252-324 are MFD domain; the sequence is YLGQEEYYSE…AQYSQQQTGY (73 aa). The span at 263–277 shows a compositional bias: polar residues; it reads YGHSQGSSEAMTPQY. Over residues 286 to 296 the composition is skewed to low complexity; sequence YSYQQSSYGEQ. Residues 341–403 are necessary for nuclear localization; that stretch reads NQQNYPGQQQ…EQGQYGNYQQ (63 aa). An SH2-binding motif is present at residues 360–363; the sequence is SQYS. Residues 378–386 carry the SH3-binding motif; sequence TSQTTSTAQ. The short motif at 398–401 is the SH2-binding element; the sequence is YGNY.

This sequence belongs to the SS18 family. As to quaternary structure, homodimer.

The protein localises to the nucleus. In terms of biological role, transcriptional activator which may be required for calcium-dependent dendritic growth and branching in cortical neurons. The polypeptide is Calcium-responsive transactivator (ss18l1) (Xenopus laevis (African clawed frog)).